The following is a 355-amino-acid chain: S-adenosylmethionine:tRNA ribosyltransferase-isomerase (355 aa).

Belongs to the QueA family. As to quaternary structure, monomer.

The protein localises to the cytoplasm. It carries out the reaction 7-aminomethyl-7-carbaguanosine(34) in tRNA + S-adenosyl-L-methionine = epoxyqueuosine(34) in tRNA + adenine + L-methionine + 2 H(+). Its pathway is tRNA modification; tRNA-queuosine biosynthesis. In terms of biological role, transfers and isomerizes the ribose moiety from AdoMet to the 7-aminomethyl group of 7-deazaguanine (preQ1-tRNA) to give epoxyqueuosine (oQ-tRNA). This chain is S-adenosylmethionine:tRNA ribosyltransferase-isomerase, found in Pectobacterium atrosepticum (strain SCRI 1043 / ATCC BAA-672) (Erwinia carotovora subsp. atroseptica).